A 466-amino-acid polypeptide reads, in one-letter code: ATP synthase subunit beta (466 aa).

153–160 (GGAGVGKT) contributes to the ATP binding site.

It belongs to the ATPase alpha/beta chains family. As to quaternary structure, F-type ATPases have 2 components, CF(1) - the catalytic core - and CF(0) - the membrane proton channel. CF(1) has five subunits: alpha(3), beta(3), gamma(1), delta(1), epsilon(1). CF(0) has three main subunits: a(1), b(2) and c(9-12). The alpha and beta chains form an alternating ring which encloses part of the gamma chain. CF(1) is attached to CF(0) by a central stalk formed by the gamma and epsilon chains, while a peripheral stalk is formed by the delta and b chains.

The protein resides in the cell membrane. It carries out the reaction ATP + H2O + 4 H(+)(in) = ADP + phosphate + 5 H(+)(out). Functionally, produces ATP from ADP in the presence of a proton gradient across the membrane. The catalytic sites are hosted primarily by the beta subunits. The chain is ATP synthase subunit beta from Leuconostoc citreum (strain KM20).